A 486-amino-acid chain; its full sequence is Cardiolipin synthase A (486 aa).

Helical transmembrane passes span 3 to 23 and 38 to 58; these read IFYDLIKWLVVLIYWLLIANI and MSWLLTIYIIPFIGIAIWFFF. 2 consecutive PLD phosphodiesterase domains span residues 219–246 and 399–426; these read LDVRQHRKIILIDNYISYSGSMNLVDPY and KKGLLHSKSILIDQQLSLIGTVNLDMRS. Active-site residues include H224, K226, D231, H404, K406, and D411.

This sequence belongs to the phospholipase D family. Cardiolipin synthase subfamily. ClsA sub-subfamily.

The protein resides in the cell inner membrane. It carries out the reaction 2 a 1,2-diacyl-sn-glycero-3-phospho-(1'-sn-glycerol) = a cardiolipin + glycerol. Its function is as follows. Catalyzes the reversible phosphatidyl group transfer from one phosphatidylglycerol molecule to another to form cardiolipin (CL) (diphosphatidylglycerol) and glycerol. The sequence is that of Cardiolipin synthase A from Buchnera aphidicola subsp. Schizaphis graminum (strain Sg).